The chain runs to 360 residues: Peptide chain release factor 1 (360 aa).

Q237 is subject to N5-methylglutamine.

Belongs to the prokaryotic/mitochondrial release factor family. Methylated by PrmC. Methylation increases the termination efficiency of RF1.

It localises to the cytoplasm. Functionally, peptide chain release factor 1 directs the termination of translation in response to the peptide chain termination codons UAG and UAA. In Teredinibacter turnerae (strain ATCC 39867 / T7901), this protein is Peptide chain release factor 1.